The chain runs to 88 residues: Small ribosomal subunit protein bS16c (88 aa).

It belongs to the bacterial ribosomal protein bS16 family.

The protein localises to the plastid. Its subcellular location is the chloroplast. The polypeptide is Small ribosomal subunit protein bS16c (Lactuca sativa (Garden lettuce)).